Here is an 81-residue protein sequence, read N- to C-terminus: Protein Vpu (81 aa).

Over 1 to 7 (MQSLEIV) the chain is Extracellular. The chain crosses the membrane as a helical span at residues 8–28 (AIVELVVAAIIAIVVWTIVFI). Residues 29-81 (EYRKILRQRKIDRLIDRIREREEDNGNESEGDQEELSALVEMGHHAPWNVDDL) are Cytoplasmic-facing. The segment at 50–81 (EEDNGNESEGDQEELSALVEMGHHAPWNVDDL) is disordered. Over residues 53 to 63 (NGNESEGDQEE) the composition is skewed to acidic residues. A Phosphoserine; by host CK2 modification is found at Ser57.

This sequence belongs to the HIV-1 VPU protein family. Homopentamer. Interacts with host CD4 and BRTC; these interactions induce proteasomal degradation of CD4. Interacts with host BST2; this interaction leads to the degradation of host BST2. Interacts with host FBXW11. Interacts with host AP1M1; this interaction plays a role in the mistrafficking and subsequent degradation of host BST2. Interacts with host RANBP2; this interaction allows Vpu to down-regulate host BLM sumoylation. Post-translationally, phosphorylated by host CK2. This phosphorylation is necessary for interaction with human BTRC and degradation of CD4.

The protein resides in the host membrane. Its activity is regulated as follows. Ion channel activity is inhibited by hexamethylene amiloride in vitro. Functionally, enhances virion budding by targeting host CD4 and Tetherin/BST2 to proteasome degradation. Degradation of CD4 prevents any unwanted premature interactions between viral Env and its host receptor CD4 in the endoplasmic reticulum. Degradation of antiretroviral protein Tetherin/BST2 is important for virion budding, as BST2 tethers new viral particles to the host cell membrane. Mechanistically, Vpu bridges either CD4 or BST2 to BTRC, a substrate recognition subunit of the Skp1/Cullin/F-box protein E3 ubiquitin ligase, induces their ubiquitination and subsequent proteasomal degradation. The alteration of the E3 ligase specificity by Vpu seems to promote the degradation of host IKBKB, leading to NF-kappa-B down-regulation and subsequent apoptosis. Acts as a viroporin that forms an oligomeric ion channel in membranes. Modulates the host DNA repair mechanisms to promote degradation of nuclear viral cDNA in cells that are already productively infected in order to suppress immune sensing and proviral hyper-integration (superinfection). Manipulates PML-NBs and modulates SUMOylation of host BLM protein thereby enhancing its DNA-end processing activity toward viral unintegrated linear DNA. Also inhibits RAD52-mediated homologous repair of viral cDNA, preventing the generation of dead-end circular forms of single copies of the long terminal repeat and permitting sustained nucleolytic attack. The protein is Protein Vpu of Homo sapiens (Human).